A 517-amino-acid polypeptide reads, in one-letter code: ATP synthase subunit alpha 1 (517 aa).

174–181 (GDRQTGKT) provides a ligand contact to ATP.

It belongs to the ATPase alpha/beta chains family. In terms of assembly, F-type ATPases have 2 components, CF(1) - the catalytic core - and CF(0) - the membrane proton channel. CF(1) has five subunits: alpha(3), beta(3), gamma(1), delta(1), epsilon(1). CF(0) has three main subunits: a(1), b(2) and c(9-12). The alpha and beta chains form an alternating ring which encloses part of the gamma chain. CF(1) is attached to CF(0) by a central stalk formed by the gamma and epsilon chains, while a peripheral stalk is formed by the delta and b chains.

It is found in the cell inner membrane. The catalysed reaction is ATP + H2O + 4 H(+)(in) = ADP + phosphate + 5 H(+)(out). Its function is as follows. Produces ATP from ADP in the presence of a proton gradient across the membrane. The alpha chain is a regulatory subunit. The polypeptide is ATP synthase subunit alpha 1 (Polaromonas naphthalenivorans (strain CJ2)).